Reading from the N-terminus, the 1134-residue chain is DENN domain-containing protein 2B (1134 aa).

Positions 1-13 (MTMTANKNSSITH) are enriched in polar residues. Positions 1–90 (MTMTANKNSS…DPSPETSPPI (90 aa)) are disordered. Residues serine 30 and serine 32 each carry the phosphoserine modification. Positions 32–43 (SPPPVLYPPRSP) are enriched in pro residues. The residue at position 228 (threonine 228) is a Phosphothreonine. Phosphoserine is present on serine 230. 2 disordered regions span residues 233–273 (SYPE…GIRK) and 289–571 (LKEQ…KRHS). Over residues 249-259 (SLYRLEKRPGR) the composition is skewed to basic and acidic residues. Residues 315-348 (GTLGTLEEPTGTASVSPSSRAGGVAGVAGEAGPP) are compositionally biased toward low complexity. The residue at position 361 (threonine 361) is a Phosphothreonine. A Phosphoserine modification is found at serine 365. Pro residues predominate over residues 370 to 385 (LLPPKSSPDPAVNPVP). Positions 389–399 (RTFEYEADKNP) are enriched in basic and acidic residues. The span at 406–428 (GLPPSPTPAAPPPLPSTPAPPVT) shows a compositional bias: pro residues. The segment covering 429–443 (RRPKKDMRGHRKSQN) has biased composition (basic residues). Residues 453 to 478 (SSLQSLYPSSPTENGTESQPKFGSKS) are compositionally biased toward polar residues. Threonine 479 carries the phosphothreonine modification. Composition is skewed to polar residues over residues 511–521 (KSQQLSENSLD) and 542–555 (SLKSNSQSLRSGNW). Phosphoserine is present on serine 542. A compositionally biased stretch (basic residues) spans 559 to 570 (KSHRLPRLPKRH). Phosphoserine is present on residues serine 571 and serine 619. Positions 633–658 (LSMSSLETASLRDENSESESDSDDRF) are disordered. A uDENN domain is found at 695–843 (EYFVVVSLKK…PFPAPGKTIK (149 aa)). Positions 865-998 (RLEHVDFECL…LQAALEQALE (134 aa)) constitute a cDENN domain. Positions 1000–1093 (KSELISQDSD…QDRELRKCRA (94 aa)) constitute a dDENN domain.

In terms of assembly, interacts with ITSN1 and GRB2. Isoform 1 interacts with the SH3 domain of ABL1. In terms of processing, phosphorylated. Phosphorylation decreases ITSN1 binding.

It is found in the cytoplasm. Its subcellular location is the cell cortex. It localises to the cell membrane. The protein localises to the recycling endosome. May be involved in cytoskeletal organization and tumorogenicity. Seems to be involved in a signaling transduction pathway leading to activation of MAPK1/ERK2. Plays a role in EGFR trafficking from recycling endosomes back to the cell membrane. In terms of biological role, guanine nucleotide exchange factor (GEF) which may activate RAB9A and RAB9B. Promotes the exchange of GDP to GTP, converting inactive GDP-bound Rab proteins into their active GTP-bound form. Its function is as follows. May block ERK2 activation stimulated by ABL1. May alter cell morphology and cell growth. The sequence is that of DENN domain-containing protein 2B (Dennd2b) from Mus musculus (Mouse).